A 118-amino-acid polypeptide reads, in one-letter code: Large ribosomal subunit protein bL20 (118 aa).

The protein belongs to the bacterial ribosomal protein bL20 family.

Its function is as follows. Binds directly to 23S ribosomal RNA and is necessary for the in vitro assembly process of the 50S ribosomal subunit. It is not involved in the protein synthesizing functions of that subunit. The polypeptide is Large ribosomal subunit protein bL20 (Lacticaseibacillus casei (strain BL23) (Lactobacillus casei)).